The sequence spans 301 residues: Ribosomal protein L11 methyltransferase (301 aa).

Threonine 146, glycine 167, aspartate 189, and asparagine 234 together coordinate S-adenosyl-L-methionine.

Belongs to the methyltransferase superfamily. PrmA family.

It localises to the cytoplasm. It catalyses the reaction L-lysyl-[protein] + 3 S-adenosyl-L-methionine = N(6),N(6),N(6)-trimethyl-L-lysyl-[protein] + 3 S-adenosyl-L-homocysteine + 3 H(+). Its function is as follows. Methylates ribosomal protein L11. This Acinetobacter baumannii (strain AB307-0294) protein is Ribosomal protein L11 methyltransferase.